The following is a 370-amino-acid chain: Glutamine synthetase (370 aa).

Residues Val-23–Gly-102 enclose the GS beta-grasp domain. Residues Cys-40–His-69 are disordered. A GS catalytic domain is found at His-109 to Asp-370.

The protein belongs to the glutamine synthetase family. Homooctamer.

The protein resides in the cytoplasm. It catalyses the reaction L-glutamate + NH4(+) + ATP = L-glutamine + ADP + phosphate + H(+). In Debaryomyces hansenii (strain ATCC 36239 / CBS 767 / BCRC 21394 / JCM 1990 / NBRC 0083 / IGC 2968) (Yeast), this protein is Glutamine synthetase (GLN1).